The primary structure comprises 371 residues: Alanine dehydrogenase (371 aa).

Substrate is bound by residues R15 and K75. Residue H96 is the Proton donor/acceptor of the active site. NAD(+) contacts are provided by residues S134, 178–179 (TA), D198, K203, S220, 239–240 (VL), 267–270 (IAID), R279, and 298–301 (VANM). D270 (proton donor/acceptor) is an active-site residue. 2 residues coordinate Mg(2+): E323 and H327.

This sequence belongs to the AlaDH/PNT family. As to quaternary structure, homohexamer. Trimer of dimers. Mg(2+) is required as a cofactor.

The protein resides in the secreted. The catalysed reaction is L-alanine + NAD(+) + H2O = pyruvate + NH4(+) + NADH + H(+). It participates in amino-acid degradation; L-alanine degradation via dehydrogenase pathway; NH(3) and pyruvate from L-alanine: step 1/1. Functionally, catalyzes the reversible reductive amination of pyruvate to L-alanine. However, since the physiological environment of M.tuberculosis has a neutral pH, it can be assumed that the enzyme catalyzes exclusively the formation of L-alanine. May play a role in cell wall synthesis as L-alanine is an important constituent of the peptidoglycan layer. The polypeptide is Alanine dehydrogenase (ald) (Mycobacterium tuberculosis (strain CDC 1551 / Oshkosh)).